The sequence spans 481 residues: Cysteine--tRNA ligase (481 aa).

Residue Cys-29 coordinates Zn(2+). A 'HIGH' region motif is present at residues 31-41; that stretch reads PTTYDYIHLGN. Zn(2+) contacts are provided by Cys-209, His-234, and Glu-238. The 'KMSKS' region signature appears at 267-271; the sequence is KMSKS. Lys-270 is an ATP binding site.

It belongs to the class-I aminoacyl-tRNA synthetase family. In terms of assembly, monomer. Requires Zn(2+) as cofactor.

Its subcellular location is the cytoplasm. The enzyme catalyses tRNA(Cys) + L-cysteine + ATP = L-cysteinyl-tRNA(Cys) + AMP + diphosphate. This Heliobacterium modesticaldum (strain ATCC 51547 / Ice1) protein is Cysteine--tRNA ligase.